Reading from the N-terminus, the 379-residue chain is Quinolinate synthase (379 aa).

Iminosuccinate contacts are provided by His-60 and Ser-81. Cys-126 serves as a coordination point for [4Fe-4S] cluster. Residues Tyr-152–Asn-154 and Ser-169 each bind iminosuccinate. Cys-213 serves as a coordination point for [4Fe-4S] cluster. Iminosuccinate contacts are provided by residues His-239–Glu-241 and Thr-256. Residue Cys-310 coordinates [4Fe-4S] cluster.

Belongs to the quinolinate synthase family. Type 1 subfamily. Requires [4Fe-4S] cluster as cofactor.

It localises to the cytoplasm. It catalyses the reaction iminosuccinate + dihydroxyacetone phosphate = quinolinate + phosphate + 2 H2O + H(+). The protein operates within cofactor biosynthesis; NAD(+) biosynthesis; quinolinate from iminoaspartate: step 1/1. In terms of biological role, catalyzes the condensation of iminoaspartate with dihydroxyacetone phosphate to form quinolinate. This Herminiimonas arsenicoxydans protein is Quinolinate synthase.